We begin with the raw amino-acid sequence, 443 residues long: Cyclic AMP receptor 4 (443 aa).

The Extracellular segment spans residues Met1–Tyr11. An N-linked (GlcNAc...) asparagine glycan is attached at Asn8. Residues Ser12–Phe32 traverse the membrane as a helical segment. Topologically, residues Lys33–Arg44 are cytoplasmic. Residues Val45 to Leu65 traverse the membrane as a helical segment. Topologically, residues Ser66–Tyr89 are extracellular. A helical membrane pass occupies residues Gly90 to Val110. Topologically, residues Lys111–Tyr119 are cytoplasmic. Residues Glu120–Ala140 form a helical membrane-spanning segment. Over Lys141–Arg161 the chain is Extracellular. Residues Phe162–Leu182 traverse the membrane as a helical segment. Residues Thr183–Lys208 lie on the Cytoplasmic side of the membrane. The chain crosses the membrane as a helical span at residues Leu209–Leu229. Residues Asn230–Pro263 lie on the Extracellular side of the membrane. Residues Leu264–Val284 traverse the membrane as a helical segment. Residues Glu285 to Phe443 lie on the Cytoplasmic side of the membrane. Disordered regions lie at residues Asn325–Pro354 and Ser396–Phe443. Positions Gln332–Gln352 are enriched in low complexity. The span at Ser396–Glu410 shows a compositional bias: polar residues. Positions Asn411–Asn425 are enriched in low complexity. Basic and acidic residues predominate over residues Ile429–Phe443.

The protein belongs to the G-protein coupled receptor 5 family. In terms of processing, C-terminal Ser or Thr residues may be phosphorylated.

It is found in the membrane. In terms of biological role, receptor for cAMP. Regulates axial patterning and cellular differentiation during late development. The activity of this receptor is mediated by G proteins. This is Cyclic AMP receptor 4 (carD) from Dictyostelium discoideum (Social amoeba).